The chain runs to 492 residues: MTLWINGDWITGQGERRRKTNPVSAEILWQGNDANAAQVAEACQAARAAFPRWARQPFTARQAIVQKFAALLEAHKADLTEVIARETGKPRWEAATEVTAMINKIAISIKAYHARTGEQKSELVDGAATLRHRPHGVLAVFGPYNFPGHLPNGHIVSALLAGNTLIFKPSELTPWTGETVIKLWERAGLPAGVLNLVQGGRETGQALSSLDDLDGLLFTGSASTGYQLHRQLSGQPEKILALEMGGNNPLIIEDVANIDAAVHLTLQSAFITAGQRCTCARRLLVKQGAQVDAFLARLVDVAGRLQPGRWDDDPQSFIGGLISAQAAQHVMEAWRQREALGGRTLLASRKVKEGTSLLTPGIIELTGVADVPDEEVFGPLLNVWRYAHFDEAIRLANNTRFGLSCGLVSTDRAQFEQLLLEARAGIVNWNKPLTGAASTAPFGGVGASGNHRPSAWYAADYCAWPMASLESPELTLPATLSPGLDFSRREAV.

Residue 220-225 participates in NAD(+) binding; that stretch reads GSASTG. Active-site residues include Glu243 and Cys277.

Belongs to the aldehyde dehydrogenase family. AstD subfamily.

The catalysed reaction is N-succinyl-L-glutamate 5-semialdehyde + NAD(+) + H2O = N-succinyl-L-glutamate + NADH + 2 H(+). It functions in the pathway amino-acid degradation; L-arginine degradation via AST pathway; L-glutamate and succinate from L-arginine: step 4/5. Functionally, catalyzes the NAD-dependent reduction of succinylglutamate semialdehyde into succinylglutamate. The sequence is that of N-succinylglutamate 5-semialdehyde dehydrogenase from Salmonella paratyphi A (strain AKU_12601).